A 591-amino-acid chain; its full sequence is L-fucose isomerase (591 aa).

Active-site proton acceptor residues include Glu338 and Asp362. 3 residues coordinate Mn(2+): Glu338, Asp362, and His529.

The protein belongs to the L-fucose isomerase family. The cofactor is Mn(2+).

The protein resides in the cytoplasm. It carries out the reaction L-fucose = L-fuculose. It functions in the pathway carbohydrate degradation; L-fucose degradation; L-lactaldehyde and glycerone phosphate from L-fucose: step 1/3. Converts the aldose L-fucose into the corresponding ketose L-fuculose. In Phocaeicola vulgatus (strain ATCC 8482 / DSM 1447 / JCM 5826 / CCUG 4940 / NBRC 14291 / NCTC 11154) (Bacteroides vulgatus), this protein is L-fucose isomerase.